Reading from the N-terminus, the 75-residue chain is Lipid-anchored plasma membrane protein CPP2 (75 aa).

The segment at 1-43 is disordered; sequence MSQQQGYYQQGPPQQGYYQQGPPQQGYYQQGPPQQGYPQQQPV. 3 tandem repeats follow at residues 4-13, 14-23, and 24-33. The tract at residues 4–33 is 3 X 10 AA tandem repeats of Q-Q-G-Y-Y-Q-Q-G-P-P; sequence QQGYYQQGPPQQGYYQQGPPQQGYYQQGPP.

Belongs to the CYSTM1 family. In terms of processing, palmitoylated near the C-terminus.

The protein resides in the cell membrane. The sequence is that of Lipid-anchored plasma membrane protein CPP2 from Saccharomyces cerevisiae (strain ATCC 204508 / S288c) (Baker's yeast).